Consider the following 355-residue polypeptide: Tryptophan--tRNA ligase (355 aa).

Residues 13–15 (QPT) and 21–22 (GN) contribute to the ATP site. The short motif at 14-22 (PTGNLHLGN) is the 'HIGH' region element. Position 137 (Asp137) interacts with L-tryptophan. Residues 149–151 (GED), Ile208, and 217–221 (KMSKS) each bind ATP. The 'KMSKS' region signature appears at 217-221 (KMSKS).

This sequence belongs to the class-I aminoacyl-tRNA synthetase family. In terms of assembly, homodimer.

The protein resides in the cytoplasm. It catalyses the reaction tRNA(Trp) + L-tryptophan + ATP = L-tryptophyl-tRNA(Trp) + AMP + diphosphate + H(+). Functionally, catalyzes the attachment of tryptophan to tRNA(Trp). The polypeptide is Tryptophan--tRNA ligase (Brucella melitensis biotype 1 (strain ATCC 23456 / CCUG 17765 / NCTC 10094 / 16M)).